The primary structure comprises 126 residues: Glycine cleavage system H protein (126 aa).

In terms of domain architecture, Lipoyl-binding spans 21–103 (TVTIGISEHA…YEGGWIVKVK (83 aa)). The residue at position 62 (Lys-62) is an N6-lipoyllysine.

It belongs to the GcvH family. As to quaternary structure, the glycine cleavage system is composed of four proteins: P, T, L and H. (R)-lipoate serves as cofactor.

Its function is as follows. The glycine cleavage system catalyzes the degradation of glycine. The H protein shuttles the methylamine group of glycine from the P protein to the T protein. In Vibrio parahaemolyticus serotype O3:K6 (strain RIMD 2210633), this protein is Glycine cleavage system H protein.